A 91-amino-acid chain; its full sequence is Putative methyltransferase YfdM (91 aa).

In Escherichia coli (strain K12), this protein is Putative methyltransferase YfdM (yfdM).